The following is a 94-amino-acid chain: MSCKVLEELEEVIRRRIEEGNPESYTYRLYSSGIPHIARKVGEEAVEAAVAAIAEGRERLAEEAADLLYHLLVLLNAAGLSLRDVCNVLEKRRK.

This sequence belongs to the PRA-PH family.

The protein resides in the cytoplasm. The enzyme catalyses 1-(5-phospho-beta-D-ribosyl)-ATP + H2O = 1-(5-phospho-beta-D-ribosyl)-5'-AMP + diphosphate + H(+). It functions in the pathway amino-acid biosynthesis; L-histidine biosynthesis; L-histidine from 5-phospho-alpha-D-ribose 1-diphosphate: step 2/9. The polypeptide is Phosphoribosyl-ATP pyrophosphatase (Pyrobaculum arsenaticum (strain DSM 13514 / JCM 11321 / PZ6)).